The primary structure comprises 557 residues: DNA 3'-5' helicase XPB (557 aa).

Residues 1 to 135 (MTDGPLIVQS…APLLGTRIAP (135 aa)) form a required for protein stability or solubility region. One can recognise a Helicase ATP-binding domain in the interval 190–344 (VDNFWNGGSG…DVFSLIGPKR (155 aa)). 203-210 (LPCGAGKT) is a binding site for ATP. The short motif at 298–301 (DEVH) is the DEAH box element. One can recognise a Helicase C-terminal domain in the interval 398 to 544 (RVVEKLVAQH…AYRIVDADDI (147 aa)).

Belongs to the helicase family. RAD25/XPB subfamily. In terms of assembly, monomer. Mn(2+) serves as cofactor. Requires Mg(2+) as cofactor. The cofactor is Ca(2+).

The enzyme catalyses Couples ATP hydrolysis with the unwinding of duplex DNA by translocating in the 3'-5' direction.. It carries out the reaction ATP + H2O = ADP + phosphate + H(+). ATP-dependent 3'-5' DNA helicase, unwinds 3'-overhangs, 3'- flaps, and splayed-arm DNA substrates but not 5'-overhangs or 5'-flap substrates. Requires ATP hydrolysis for activity; the ATPase activity is DNA-dependent and requires a minimum of 4 single-stranded nucleotides (nt) with 6-10 nt providing all necessary interactions for full processive unwinding. The ATPase prefers ATP over CTP or GTP, is almost inactive with TTP. The protein is DNA 3'-5' helicase XPB of Kineococcus radiotolerans (strain ATCC BAA-149 / DSM 14245 / SRS30216).